A 160-amino-acid chain; its full sequence is Transcription elongation factor GreA (160 aa).

Positions 14 to 38 (IKAELASLKKERPEVIKAIAEAREE) form a coiled coil.

The protein belongs to the GreA/GreB family.

Functionally, necessary for efficient RNA polymerase transcription elongation past template-encoded arresting sites. The arresting sites in DNA have the property of trapping a certain fraction of elongating RNA polymerases that pass through, resulting in locked ternary complexes. Cleavage of the nascent transcript by cleavage factors such as GreA or GreB allows the resumption of elongation from the new 3'terminus. GreA releases sequences of 2 to 3 nucleotides. This chain is Transcription elongation factor GreA, found in Maridesulfovibrio salexigens (strain ATCC 14822 / DSM 2638 / NCIMB 8403 / VKM B-1763) (Desulfovibrio salexigens).